The chain runs to 310 residues: Protein TIFY 6A (310 aa).

The Tify domain maps to 141-176 (SKPLPPQLTIFYAGSVLVYQDIAPEKAQAIMLLAGN). A Jas motif is present at residues 259–284 (PQTRKASLARFLEKRKERVINVSPYY). The short motif at 261–268 (TRKASLAR) is the Nuclear localization signal element.

Belongs to the TIFY/JAZ family. In terms of assembly, homo- and heterodimer. Interacts with MYC2, AFPH2/NINJA, TIFY10A/JAZ1, TIFY6B/JAZ3, TIFY5A/JAZ8, TIFY9/JAZ10 and TIFY3A/JAZ11. Interacts with RHD6 and RSL1. In terms of processing, ubiquitinated. Targeted for degradation by the SCF(COI1) E3 ubiquitin ligase-proteasome pathway during jasmonate signaling.

The protein resides in the nucleus. Repressor of jasmonate responses. Interacts with and suppresses RHD6 and RSL1 transcription factor activities to negatively regulate jasmonate-stimulated root hair development. This Arabidopsis thaliana (Mouse-ear cress) protein is Protein TIFY 6A (TIFY6A).